Consider the following 113-residue polypeptide: Large ribosomal subunit protein uL24 (113 aa).

It belongs to the universal ribosomal protein uL24 family. Part of the 50S ribosomal subunit.

Its function is as follows. One of two assembly initiator proteins, it binds directly to the 5'-end of the 23S rRNA, where it nucleates assembly of the 50S subunit. One of the proteins that surrounds the polypeptide exit tunnel on the outside of the subunit. This is Large ribosomal subunit protein uL24 from Rickettsia typhi (strain ATCC VR-144 / Wilmington).